Reading from the N-terminus, the 389-residue chain is Basigin (389 aa).

The signal sequence occupies residues 1-21 (MAAALLLALAFTLLSGQGACA). Residues 22-325 (AAGFLKAPLS…ETISLRVRSR (304 aa)) lie on the Extracellular side of the membrane. The region spanning 37 to 120 (GGSVVLHCEA…SSDPDRNHLT (84 aa)) is the Ig-like domain. 3 disulfide bridges follow: Cys-44/Cys-108, Cys-157/Cys-203, and Cys-242/Cys-305. One can recognise an Ig-like C2-type domain in the interval 138–219 (EPGTIQTSVQ…VGRSEINVEG (82 aa)). N-linked (GlcNAc...) asparagine glycosylation is found at Asn-160, Asn-270, and Asn-306. The region spanning 221-319 (PRIKVGKKSE…AQGTTRETIS (99 aa)) is the Ig-like V-type domain. A helical transmembrane segment spans residues 326 to 349 (MAALWPFLGIVAEVLVLVTIIFIY). Topologically, residues 350 to 389 (EKRRKPDQTLDEDDPGAAPLKGSGTHMNDKDKNVRQRNAT) are cytoplasmic. The tract at residues 356-389 (DQTLDEDDPGAAPLKGSGTHMNDKDKNVRQRNAT) is disordered. Phosphothreonine is present on Thr-358. Position 372 is a phosphoserine (Ser-372).

Interacts with NXNL1. Interacts with SLC2A1 and SLC16A1/GLUT1. Interacts with XKR8; promoting its localization at the cell membrane. In terms of assembly, interacts with ATP1B2, MAG and L1CAM. Interacts with SLC16A7. Interacts with VEGFA, KDR/VEGFR2, PPIA/CYPA, SLC1A3, SLC16A11 and SLC16A12. Interacts with PPIL2; regulates BSG transport to the cell membrane. Interacts with SLC16A1; interaction mediates SLC16A1 targeting to the plasma membrane. Interacts with SLC16A3; interaction mediates SLC16A3 targeting to the plasma membrane. As to quaternary structure, interacts with SLC16A6; this interaction mediates targeting to the plasma membrane. In terms of processing, N-glycosylated. Post-translationally, N-glycosylated. During spermatogenesis, probably deglycosylated during epididymal transit. As to expression, retina-specific. Expressed in both rods and cones (at protein level). Testis and caput, corpus and cauda epididymides (at protein level). Expressed in the brain, lung, liver, kidney, heart, spleen, uterus, retina and skeletal muscle.

The protein localises to the cell membrane. It is found in the photoreceptor inner segment. It localises to the cell projection. Its subcellular location is the cilium. The protein resides in the photoreceptor outer segment. The protein localises to the endoplasmic reticulum membrane. It is found in the basolateral cell membrane. Essential for normal retinal maturation and development. Acts as a retinal cell surface receptor for NXNL1 and plays an important role in NXNL1-mediated survival of retinal cone photoreceptors. In association with glucose transporter SLC16A1/GLUT1 and NXNL1, promotes retinal cone survival by enhancing aerobic glycolysis and accelerating the entry of glucose into photoreceptors. In terms of biological role, signaling receptor for cyclophilins, essential for PPIA/CYPA and PPIB/CYPB-dependent signaling related to chemotaxis and adhesion of immune cells. Plays an important role in targeting the monocarboxylate transporters SLC16A1, SLC16A3 and SLC16A8 to the plasma membrane. Acts as a coreceptor for vascular endothelial growth factor receptor 2 (KDR/VEGFR2) in endothelial cells enhancing its VEGFA-mediated activation and downstream signaling. Promotes angiogenesis through EPAS1/HIF2A-mediated up-regulation of VEGFA and KDR/VEGFR2 in endothelial cells. Plays an important role in spermatogenesis; mediates interactions between germ cells and Sertoli cell and is essential for the development/differentiation of germ cells to round spermatids. In Mus musculus (Mouse), this protein is Basigin (Bsg).